A 218-amino-acid chain; its full sequence is DNA endonuclease I-ChuI (218 aa).

Belongs to the LAGLIDADG endonuclease family.

The protein localises to the plastid. Its subcellular location is the chloroplast. Probable endonuclease involved in intron homing. Encoded in the group-I intron of the subunit rRNA-encoding gene (rrnL), it generates a staggered cut with 4-nt (CTCG) 3'-OH overhangs 2 bp downstream from the intron insertion site. The sequence is that of DNA endonuclease I-ChuI from Chlamydomonas applanata (Chlamydomonas humicola).